The following is a 433-amino-acid chain: Ribulose bisphosphate carboxylase/oxygenase activase, chloroplastic (433 aa).

Polar residues predominate over residues 1-20; it reads MAAAFSSTVGAPASTPTRSS. A chloroplast-targeting transit peptide spans 1–53; sequence MAAAFSSTVGAPASTPTRSSFLGKKLNKPQVSAAVTYHGKSSSSNSRFKAMAA. The disordered stretch occupies residues 1-60; sequence MAAAFSSTVGAPASTPTRSSFLGKKLNKPQVSAAVTYHGKSSSSNSRFKAMAAKEVDETK. An ATP-binding site is contributed by 161 to 168; the sequence is GGKGQGKS.

It belongs to the RuBisCO activase family.

Its subcellular location is the plastid. The protein resides in the chloroplast stroma. Activation of RuBisCO (ribulose-1,5-bisphosphate carboxylase/oxygenase; EC 4.1.1.39) involves the ATP-dependent carboxylation of the epsilon-amino group of lysine leading to a carbamate structure. The sequence is that of Ribulose bisphosphate carboxylase/oxygenase activase, chloroplastic (RCA1) from Zea mays (Maize).